Reading from the N-terminus, the 142-residue chain is Antirestriction protein KlcA (142 aa).

This sequence belongs to the antirestriction protein family.

Functionally, could be involved in overcoming restriction barriers during establishment after conjugative transfer. The sequence is that of Antirestriction protein KlcA (klcA) from Escherichia coli.